The following is a 492-amino-acid chain: Probable cytochrome P450 513A3 (492 aa).

A helical membrane pass occupies residues 1–21 (MTSLTLYLIIFSIILYLFVNR). Cysteine 437 is a binding site for heme.

The protein belongs to the cytochrome P450 family. Requires heme as cofactor.

It is found in the membrane. The protein is Probable cytochrome P450 513A3 (cyp513A3) of Dictyostelium discoideum (Social amoeba).